Here is a 385-residue protein sequence, read N- to C-terminus: Heat-inducible transcription repressor HrcA (385 aa).

Belongs to the HrcA family.

Functionally, negative regulator of class I heat shock genes (grpE-dnaK-dnaJ and groELS operons). Prevents heat-shock induction of these operons. The polypeptide is Heat-inducible transcription repressor HrcA (Protochlamydia amoebophila (strain UWE25)).